Here is a 564-residue protein sequence, read N- to C-terminus: 3beta-hydroxysteroid-dehydrogenase/decarboxylase isoform 2 (564 aa).

Position 16 to 21 (16 to 21 (GGRGFA)) interacts with NAD(+). Asn-146 and Asn-158 each carry an N-linked (GlcNAc...) asparagine glycan. The NAD(+) site is built by Tyr-161 and Lys-165. Catalysis depends on Lys-165, which acts as the Proton donor. One can recognise a Reticulon domain in the interval 384–564 (VADTLLWKDL…EKLFGSKKHD (181 aa)). A run of 2 helical transmembrane segments spans residues 398–418 (IAIF…STVV) and 424–444 (ALLV…KIFG). Asn-474 carries N-linked (GlcNAc...) asparagine glycosylation. Transmembrane regions (helical) follow at residues 486–506 (GNDW…SLAG) and 507–527 (AISL…AFLV).

It belongs to the 3-beta-HSD family.

It is found in the endoplasmic reticulum membrane. It carries out the reaction a 3beta-hydroxysteroid-4alpha-carboxylate + NAD(+) = a 3-oxosteroid + CO2 + NADH. It catalyses the reaction 4alpha-carboxy-4beta,14alpha-dimethyl-9beta,19-cyclo-5alpha-ergost-24(24(1))-en-3beta-ol + NAD(+) = cycloeucalenone + CO2 + NADH. The protein operates within steroid biosynthesis; zymosterol biosynthesis; zymosterol from lanosterol: step 4/6. In terms of biological role, 3beta-hydroxysteroid-dehydrogenase/decarboxylase involved in sterol synthesis. Catalyzes the formation of 3-oxosteroids from 3beta-hydroxysteroids-4alpha-carboxylate. Involved in the regulation of inflorescence internodes and leaves growth, probably by affecting auxin transporter activity possibly by altering sterol composition in the membranes. This chain is 3beta-hydroxysteroid-dehydrogenase/decarboxylase isoform 2, found in Arabidopsis thaliana (Mouse-ear cress).